The chain runs to 402 residues: Multidrug resistance protein MdtH (402 aa).

11 consecutive transmembrane segments (helical) span residues tyrosine 13 to isoleucine 33, alanine 45 to phenylalanine 65, proline 99 to phenylalanine 116, leucine 139 to leucine 159, leucine 165 to leucine 185, valine 214 to methionine 234, alanine 244 to alanine 264, leucine 277 to leucine 297, leucine 300 to serine 322, leucine 340 to glycine 360, and leucine 368 to phenylalanine 388.

It belongs to the major facilitator superfamily. DHA1 family. MdtH (TC 2.A.1.2.21) subfamily.

The protein resides in the cell inner membrane. The polypeptide is Multidrug resistance protein MdtH (Citrobacter koseri (strain ATCC BAA-895 / CDC 4225-83 / SGSC4696)).